The sequence spans 478 residues: 7-dehydrocholesterol reductase (478 aa).

Residues 1–28 (MMASDRVRKRHKGSANGAQTVEKEPSKE) are disordered. 6 helical membrane passes run 43 to 63 (LSGVILLLCFAPFLVSFFIMA), 97 to 117 (WAAAKIYAIWVTFQVVLYMCV), 180 to 200 (WIPLLWCTNILGYAVSTFAFI), 269 to 289 (VTNSMILVNVLQAVYVVDFFW), 309 to 329 (LGWGDCVWLPFLYTLQGLYLV), and 333 to 353 (IQLSTPHAAGVLILGLVGYYI). Residues lysine 361, arginine 365, methionine 398, tryptophan 403, and 410–411 (NY) contribute to the NADP(+) site. A helical transmembrane segment spans residues 424-444 (ACGGNHLLPYFYIIYMTILLV). Residues aspartate 450, 454–458 (CSNKY), and tyrosine 465 contribute to the NADP(+) site.

This sequence belongs to the ERG4/ERG24 family.

The protein resides in the endoplasmic reticulum membrane. The enzyme catalyses cholesterol + NADP(+) = 7-dehydrocholesterol + NADPH + H(+). It carries out the reaction 7-dehydrodesmosterol + NADPH + H(+) = desmosterol + NADP(+). The protein operates within steroid biosynthesis; cholesterol biosynthesis. In terms of biological role, catalyzes the last step of the cholesterol synthesis pathway, which transforms cholesta-5,7-dien-3beta-ol (7-dehydrocholesterol,7-DHC) into cholesterol by reducing the C7-C8 double bond of its sterol core. Can also metabolize cholesta-5,7,24-trien-3beta-ol (7-dehydrodemosterol, 7-DHD) to desmosterol, which is then metabolized by the Delta(24)-sterol reductase (DHCR24) to cholesterol. Modulates ferroptosis (a form of regulated cell death driven by iron-dependent lipid peroxidation) through the metabolic breakdown of the anti-ferroptotic metabolites 7-DHC and 7-DHD which, when accumulated, divert the propagation of peroxyl radical-mediated damage from phospholipid components to its sterol core, protecting plasma and mitochondrial membranes from phospholipid autoxidation. This Danio rerio (Zebrafish) protein is 7-dehydrocholesterol reductase (dhcr7).